Reading from the N-terminus, the 103-residue chain is Large ribosomal subunit protein bL21 (103 aa).

The protein belongs to the bacterial ribosomal protein bL21 family. Part of the 50S ribosomal subunit. Contacts protein L20.

In terms of biological role, this protein binds to 23S rRNA in the presence of protein L20. The polypeptide is Large ribosomal subunit protein bL21 (Thioalkalivibrio sulfidiphilus (strain HL-EbGR7)).